A 322-amino-acid chain; its full sequence is Lactamase-like protein nscB (322 aa).

H97, H99, D101, and H102 together coordinate Zn(2+). D101 acts as the Proton donor/acceptor in catalysis.

Belongs to the metallo-beta-lactamase superfamily. Requires Zn(2+) as cofactor.

It participates in secondary metabolite biosynthesis. Its function is as follows. Lactamase-like protein; part of the gene cluster that mediates the biosynthesis of neosartoricin B, a prenylated anthracenone that probably exhibits T-cell antiproliferative activity, suggestive of a physiological role as an immunosuppressive agent. The non-reducing polyketide synthase nscA probably synthesizes and cyclizes the decaketide backbone. The hydrolase nscB then mediates the product release through hydrolysis followed by spontaneous decarboxylation. The prenyltransferase nscD catalyzes the addition of the dimethylallyl group to the aromatic C5. The FAD-dependent monooxygenase nscC is then responsible for the stereospecific hydroxylation at C2. Neosartoricin B can be converted into two additional compounds neosartoricins C and D. Neosartoricin C is a spirocyclic compound that is cyclized through the attack of C3 hydroxyl on C14, followed by dehydration. On the other hand, neosartoricin D is a further cyclized compound in which attack of C2 on C14 in neosartoricin C results in the formation of the acetal-containing dioxabicyclo-octanone ring. Both of these compounds are novel and possibly represent related metabolites of the gene cluster. The sequence is that of Lactamase-like protein nscB from Trichophyton rubrum (strain ATCC MYA-4607 / CBS 118892) (Athlete's foot fungus).